The following is a 702-amino-acid chain: MRYSHPLVPLSFMTTALVTTALPYANGPLHLGHLVGYIQADIWVRARRLGGHNTWFVCADDTHGTPIMLAAEKAGMPPEAFIATTQASHERDFAAFNVAFDHYDSTHSPVNRHLTEQSYLTLKQAGHITCRSVAQFYDPAKGMFLPDRYVKGTCPNCGATDQYGDNCEACGATYDPTELKNPYSVISGATPELRDSEHFFFEVAHFDTFLRHWLSGDVALPSVKNKLKEWLDAKGGLRPWDISRDAPYFGFEIPDQPGKYFYVWLDAPIGYLCSFKTLCTRIGEDFDTHLRSGTTTELHHFIGKDIVNFHALFWPAVLHGTGRCAPTRLHVNGYLTVDGAKMSKSRGTFIMARTYLDAGLEPDALRYYFAAKSSGDVDDLDLNLSDFVARVNADLVGKLVNLASRCASFIGTRFNGQLADILPDRIQYDQFVAALTPIRDAYERNDTASAIRQTMQLADEANKYIDETKPWIIAKQHHADAQLHAVCTQGLNLFRVLITALKPILPHTSIQAETFLAAPVTTWQDVNQPLTGGHTIQPYSPLFTRIDKKIIEVMINASKDTLAPPPASAKQQNASMSNTAPPPTAEEPETTAPTIGIDDFAKLDLRIGKVLVCEYVEGSDKLLRFELDAGPLGKRQIFSGIRASYSNPETLIGRNVVFIANLAPRKMRFGISQGMILSAGFDSGTLALLDADSSAQPGMPVR.

The short motif at 23-33 (PYANGPLHLGH) is the 'HIGH' region element. Zn(2+) contacts are provided by Cys-154, Cys-157, Cys-167, and Cys-170. Residues 341 to 345 (KMSKS) carry the 'KMSKS' region motif. Residue Lys-344 coordinates ATP. A disordered region spans residues 562–593 (LAPPPASAKQQNASMSNTAPPPTAEEPETTAP). Positions 569 to 578 (AKQQNASMSN) are enriched in polar residues. The tRNA-binding domain maps to 599–702 (DFAKLDLRIG…SSAQPGMPVR (104 aa)).

Belongs to the class-I aminoacyl-tRNA synthetase family. MetG type 1 subfamily. In terms of assembly, homodimer. It depends on Zn(2+) as a cofactor.

It localises to the cytoplasm. The enzyme catalyses tRNA(Met) + L-methionine + ATP = L-methionyl-tRNA(Met) + AMP + diphosphate. Its function is as follows. Is required not only for elongation of protein synthesis but also for the initiation of all mRNA translation through initiator tRNA(fMet) aminoacylation. This is Methionine--tRNA ligase from Xylella fastidiosa (strain M12).